Consider the following 158-residue polypeptide: Trafficking protein particle complex subunit 6B (158 aa).

The protein belongs to the TRAPP small subunits family. BET3 subfamily. Homodimer. Part of a TRAPP complex. Heterodimer with TRAPPC3. The heterodimer TRAPPC6B-TRAPPC3 interacts with TRAPPC1 likely providing a core for TRAPP complex formation.

The protein resides in the golgi apparatus. It is found in the cis-Golgi network. Its subcellular location is the endoplasmic reticulum. Its function is as follows. Component of a transport protein particle (TRAPP) complex that may function in specific stages of inter-organelle traffic. Specifically involved in the early development of neural circuitry, likely by controlling the frequency and amplitude of intracellular calcium transients implicated in the regulation of neuron differentiation and survival. This Bos taurus (Bovine) protein is Trafficking protein particle complex subunit 6B.